Here is a 264-residue protein sequence, read N- to C-terminus: COP9 signalosome complex subunit 7b (264 aa).

Residue Ala-2 is modified to N-acetylalanine. Positions 2 to 159 constitute a PCI domain; it reads AGEQKPSSNL…QLLEVDFCIG (158 aa). A coiled-coil region spans residues 194–237; sequence RANQYKENHSRTQQQVEAEVTNIKKTLKATASSSAQEMEQQLAE. The span at 223–232 shows a compositional bias: polar residues; sequence TASSSAQEME. The disordered stretch occupies residues 223–264; the sequence is TASSSAQEMEQQLAERECPPHAEQRQPTKKMSKVKGLVSSRH. The segment covering 235–248 has biased composition (basic and acidic residues); sequence LAERECPPHAEQRQ.

It belongs to the CSN7/EIF3M family. CSN7 subfamily. Component of the CSN complex, composed of COPS1/GPS1, COPS2, COPS3, COPS4, COPS5, COPS6, COPS7 (COPS7A or COPS7B), COPS8 and COPS9. In the complex, it probably interacts directly with COPS1, COPS2, COPS4, COPS5, COPS6 and COPS8. Interacts with EIF3S6.

It localises to the cytoplasm. The protein resides in the nucleus. In terms of biological role, component of the COP9 signalosome complex (CSN), a complex involved in various cellular and developmental processes. The CSN complex is an essential regulator of the ubiquitin (Ubl) conjugation pathway by mediating the deneddylation of the cullin subunits of SCF-type E3 ligase complexes, leading to decrease the Ubl ligase activity of SCF-type complexes such as SCF, CSA or DDB2. The complex is also involved in phosphorylation of p53/TP53, JUN, I-kappa-B-alpha/NFKBIA, ITPK1 and IRF8/ICSBP, possibly via its association with CK2 and PKD kinases. CSN-dependent phosphorylation of TP53 and JUN promotes and protects degradation by the Ubl system, respectively. This is COP9 signalosome complex subunit 7b (COPS7B) from Bos taurus (Bovine).